The sequence spans 197 residues: NADH-quinone oxidoreductase subunit C (197 aa).

This sequence belongs to the complex I 30 kDa subunit family. As to quaternary structure, NDH-1 is composed of 14 different subunits. Subunits NuoB, C, D, E, F, and G constitute the peripheral sector of the complex.

Its subcellular location is the cell inner membrane. The catalysed reaction is a quinone + NADH + 5 H(+)(in) = a quinol + NAD(+) + 4 H(+)(out). NDH-1 shuttles electrons from NADH, via FMN and iron-sulfur (Fe-S) centers, to quinones in the respiratory chain. The immediate electron acceptor for the enzyme in this species is believed to be ubiquinone. Couples the redox reaction to proton translocation (for every two electrons transferred, four hydrogen ions are translocated across the cytoplasmic membrane), and thus conserves the redox energy in a proton gradient. The sequence is that of NADH-quinone oxidoreductase subunit C from Neisseria meningitidis serogroup B (strain ATCC BAA-335 / MC58).